The following is a 394-amino-acid chain: T-cell acute lymphocytic leukemia protein 1 (394 aa).

Residues methionine 1–arginine 17 are compositionally biased toward basic and acidic residues. Residues methionine 1–proline 49 form a disordered region. A run of 7 repeats spans residues threonine 83–threonine 89, threonine 94–proline 100, threonine 105–proline 111, threonine 116–proline 122, threonine 127–proline 133, serine 149–proline 155, and threonine 167–proline 173. The 7 X 7 AA approximate repeats of [TS]-E-L-C-R-[AP]-P stretch occupies residues threonine 83–proline 173. The 53-residue stretch at valine 262 to leucine 314 folds into the bHLH domain. The disordered stretch occupies residues leucine 347–arginine 394. Residues serine 367–histidine 377 show a composition bias toward basic and acidic residues.

As to expression, first expressed in patches on the ventral side of the embryo in a region that will give rise to hematopoietic tissue. By late neurula stages, expressed throughout the ventral blood island region. By tailbud stages, expression extends to probable vascular progenitor cells, but is excluded from the presumptive liver anlage. Also expressed in the central nervous system at the tailbud stage.

It is found in the nucleus. Its function is as follows. Transcription factor that acts synergistically with lmo2 and gata1 to specify embryonic dorsal mesoderm to a hematopoietic fate. In Xenopus laevis (African clawed frog), this protein is T-cell acute lymphocytic leukemia protein 1.